A 406-amino-acid chain; its full sequence is MEPKIRRILNKELQRQRDCICLIASENYVSRDILEVTGSILTNKYAEGYPTRRFYEGCEVVDESESLAINTCKELFGAKWANVQPHSGSSANYAVYLALLKPGDAILGLDLNCGGHLTHGNKFNFSGKQYQPYSYTINPETEMLDYDEVLRVAREVKPKLIICGFSNYSRTVDFERFSAIAKEVGAYLLADIAHIAGLVAAGLHPNPLPYTDVVTSTTHKTLRGPRGGLIMSNNEAIIRKLDSGVFPGCQGGPLQHVIAAKYVCFKEALQPKYKQYIQNVKTNAASMASWFKQQGYRVISNGTDTHLFSLDVGKGKDVSQWLQQANIVLNMNTVPFDKNPAINPSGIRIGTPAMTTRGFKEKHFLYVAALIDKIIKSDGNKKVIKEVKKAVLKLLERFPLYKGLEY.

(6S)-5,6,7,8-tetrahydrofolate contacts are provided by residues Leu-111 and 115-117 (GHL). Position 220 is an N6-(pyridoxal phosphate)lysine (Lys-220).

It belongs to the SHMT family. In terms of assembly, homodimer. The cofactor is pyridoxal 5'-phosphate.

Its subcellular location is the cytoplasm. It catalyses the reaction (6R)-5,10-methylene-5,6,7,8-tetrahydrofolate + glycine + H2O = (6S)-5,6,7,8-tetrahydrofolate + L-serine. The protein operates within one-carbon metabolism; tetrahydrofolate interconversion. Its pathway is amino-acid biosynthesis; glycine biosynthesis; glycine from L-serine: step 1/1. Catalyzes the reversible interconversion of serine and glycine with tetrahydrofolate (THF) serving as the one-carbon carrier. This reaction serves as the major source of one-carbon groups required for the biosynthesis of purines, thymidylate, methionine, and other important biomolecules. Also exhibits THF-independent aldolase activity toward beta-hydroxyamino acids, producing glycine and aldehydes, via a retro-aldol mechanism. This is Serine hydroxymethyltransferase from Mycoplasma pneumoniae (strain ATCC 29342 / M129 / Subtype 1) (Mycoplasmoides pneumoniae).